The primary structure comprises 102 residues: MSEKSVEAAAELSAKDLKEKKEKVEEKAGRKERKKEVVEEEENGAEEEEEETAEDGEEEDDGDEEDEEEEEEEDEGPALVRAAEEEDEADPKRQKTENGASA.

Residues 1 to 102 form a disordered region; the sequence is MSEKSVEAAA…RQKTENGASA (102 aa). S2 bears the N-acetylserine mark. S2 is subject to Phosphoserine. The residue at position 4 (K4) is an N6-acetyllysine. S5 and S13 each carry phosphoserine. A compositionally biased stretch (basic and acidic residues) spans 13–37; it reads SAKDLKEKKEKVEEKAGRKERKKEV. K15 is modified (N6-acetyllysine). The span at 38-76 shows a compositional bias: acidic residues; that stretch reads VEEEENGAEEEEEETAEDGEEEDDGDEEDEEEEEEEDEG. T52 is subject to Phosphothreonine. K92 carries the post-translational modification N6-acetyllysine.

Belongs to the pro/parathymosin family.

Its function is as follows. Parathymosin may mediate immune function by blocking the effect of prothymosin alpha which confers resistance to certain opportunistic infections. The sequence is that of Parathymosin (PTMS) from Bos taurus (Bovine).